Consider the following 228-residue polypeptide: UPF0502 protein Rfer_1648 (228 aa).

The protein belongs to the UPF0502 family.

The sequence is that of UPF0502 protein Rfer_1648 from Albidiferax ferrireducens (strain ATCC BAA-621 / DSM 15236 / T118) (Rhodoferax ferrireducens).